Consider the following 724-residue polypeptide: Propionyl-CoA carboxylase alpha chain, mitochondrial (724 aa).

The N-terminal 48 residues, 1–48 (MAGQWVRTVALLAARRHWRRSSQQQLLGTLKHAPVYSYQCLVVSRSLS), are a transit peptide targeting the mitochondrion. Residues 58-505 (TFDKILIANR…STKFLSDVYP (448 aa)) form the Biotin carboxylation domain. Lys61 is modified (N6-acetyllysine; alternate). Residue Lys61 is modified to N6-succinyllysine; alternate. At Lys115 the chain carries N6-succinyllysine. Lys146 carries the N6-acetyllysine; alternate modification. Lys146 is modified (N6-succinyllysine; alternate). Lys150 is subject to N6-acetyllysine. Lys173 contributes to the ATP binding site. One can recognise an ATP-grasp domain in the interval 177–374 (KLLAKRAKVN…LVQEMILVAK (198 aa)). Lys184 is subject to N6-succinyllysine. The residue at position 196 (Lys196) is an N6-acetyllysine; alternate. Position 196 is an N6-succinyllysine; alternate (Lys196). ATP is bound by residues 205–266 (AREI…PRHI), Glu257, and Asn292. At Ser248 the chain carries Phosphoserine. An N6-succinyllysine modification is found at Lys258. Lys324 carries the N6-acetyllysine; alternate modification. An N6-succinyllysine; alternate modification is found at Lys324. Mg(2+) contacts are provided by Glu332, Glu345, and Asn347. Glu332, Glu345, and Asn347 together coordinate Mn(2+). Arg349 is a catalytic residue. N6-succinyllysine is present on residues Lys381 and Lys403. Phe405 contributes to the biotin binding site. Residue Lys492 is modified to N6-acetyllysine. 4 positions are modified to N6-succinyllysine: Lys498, Lys509, Lys554, and Lys644. The region spanning 645-724 (FMLEKVPKDT…GEGDLLVELE (80 aa)) is the Biotinyl-binding domain. Lys690 is modified (N6-biotinyllysine; by HLCS).

As to quaternary structure, the holoenzyme is a dodecamer composed of 6 PCCA/alpha subunits and 6 PCCB/beta subunits. Interacts (via the biotin carboxylation domain) with SIRT4. Interacts with SIRT3 and SIRT5. Mg(2+) is required as a cofactor. Requires Mn(2+) as cofactor. It depends on biotin as a cofactor. Post-translationally, acetylated. The biotin cofactor is covalently attached to the C-terminal biotinyl-binding domain and is required for the catalytic activity. Biotinylation is catalyzed by HLCS.

The protein localises to the mitochondrion matrix. The enzyme catalyses propanoyl-CoA + hydrogencarbonate + ATP = (S)-methylmalonyl-CoA + ADP + phosphate + H(+). It carries out the reaction butanoyl-CoA + hydrogencarbonate + ATP = (2S)-ethylmalonyl-CoA + ADP + phosphate + H(+). Its pathway is metabolic intermediate metabolism; propanoyl-CoA degradation; succinyl-CoA from propanoyl-CoA: step 1/3. This is one of the 2 subunits of the biotin-dependent propionyl-CoA carboxylase (PCC), a mitochondrial enzyme involved in the catabolism of odd chain fatty acids, branched-chain amino acids isoleucine, threonine, methionine, and valine and other metabolites. Propionyl-CoA carboxylase catalyzes the carboxylation of propionyl-CoA/propanoyl-CoA to D-methylmalonyl-CoA/(S)-methylmalonyl-CoA. Within the holoenzyme, the alpha subunit catalyzes the ATP-dependent carboxylation of the biotin carried by the biotin carboxyl carrier (BCC) domain, while the beta subunit then transfers the carboxyl group from carboxylated biotin to propionyl-CoA. Propionyl-CoA carboxylase also significantly acts on butyryl-CoA/butanoyl-CoA, which is converted to ethylmalonyl-CoA/(2S)-ethylmalonyl-CoA. Other alternative minor substrates include (2E)-butenoyl-CoA/crotonoyl-CoA. This is Propionyl-CoA carboxylase alpha chain, mitochondrial from Mus musculus (Mouse).